Reading from the N-terminus, the 257-residue chain is Homeobox protein goosecoid (257 aa).

The segment at residues 160–219 (KRRHRTIFTDEQLEALENLFQETKYPDVGTREQLARKVHLREEKVEVWFKNRRAKWRRQK) is a DNA-binding region (homeobox). Residues 213–257 (AKWRRQKRSSSEESENAEKWNKTSSSKASPEKREEEGKSDLDSDS) form a disordered region. Basic and acidic residues predominate over residues 241 to 257 (SPEKREEEGKSDLDSDS).

It belongs to the paired homeobox family. Bicoid subfamily.

It localises to the nucleus. Its function is as follows. Regulates chordin (CHRD). May play a role in spatial programing within discrete embryonic fields or lineage compartments during organogenesis. In concert with NKX3-2, plays a role in defining the structural components of the middle ear; required for the development of the entire tympanic ring. Probably involved in the regulatory networks that define neural crest cell fate specification and determine mesoderm cell lineages in mammals. The chain is Homeobox protein goosecoid (GSC) from Saguinus labiatus (Red-chested mustached tamarin).